The chain runs to 395 residues: Inactive serine protease 54 (395 aa).

The first 30 residues, 1–30 (MVSAAGLSGDGKMRGVLLVLLGLLYSSTSC), serve as a signal peptide directing secretion. The Peptidase S1 domain maps to 37–269 (VFYGPDPKEG…YSKWITSKAE (233 aa)). The N-linked (GlcNAc...) asparagine glycan is linked to Asn123. 3 disulfides stabilise this stretch: Cys164-Cys227, Cys195-Cys205, and Cys217-Cys248. Residues 324-348 (RLGNSSRDSLDVREKDVKESGRSPE) form a disordered region. N-linked (GlcNAc...) asparagine glycosylation is present at Asn327. Basic and acidic residues predominate over residues 331 to 345 (DSLDVREKDVKESGR).

This sequence belongs to the peptidase S1 family. Plasma kallikrein subfamily.

Its subcellular location is the secreted. The protein is Inactive serine protease 54 (PRSS54) of Homo sapiens (Human).